Consider the following 917-residue polypeptide: Alanine--tRNA ligase (917 aa).

Residues H615, H619, C719, and H723 each contribute to the Zn(2+) site.

The protein belongs to the class-II aminoacyl-tRNA synthetase family. Zn(2+) serves as cofactor.

It is found in the cytoplasm. The enzyme catalyses tRNA(Ala) + L-alanine + ATP = L-alanyl-tRNA(Ala) + AMP + diphosphate. In terms of biological role, catalyzes the attachment of alanine to tRNA(Ala) in a two-step reaction: alanine is first activated by ATP to form Ala-AMP and then transferred to the acceptor end of tRNA(Ala). Also edits incorrectly charged Ser-tRNA(Ala) and Gly-tRNA(Ala) via its editing domain. The protein is Alanine--tRNA ligase of Thermococcus kodakarensis (strain ATCC BAA-918 / JCM 12380 / KOD1) (Pyrococcus kodakaraensis (strain KOD1)).